A 201-amino-acid polypeptide reads, in one-letter code: 3-isopropylmalate dehydratase small subunit (201 aa).

The protein belongs to the LeuD family. LeuD type 1 subfamily. In terms of assembly, heterodimer of LeuC and LeuD.

It catalyses the reaction (2R,3S)-3-isopropylmalate = (2S)-2-isopropylmalate. It participates in amino-acid biosynthesis; L-leucine biosynthesis; L-leucine from 3-methyl-2-oxobutanoate: step 2/4. Catalyzes the isomerization between 2-isopropylmalate and 3-isopropylmalate, via the formation of 2-isopropylmaleate. The chain is 3-isopropylmalate dehydratase small subunit from Dinoroseobacter shibae (strain DSM 16493 / NCIMB 14021 / DFL 12).